The chain runs to 180 residues: Decaprenylphosphoryl-5-phosphoribose phosphatase (180 aa).

The next 4 helical transmembrane spans lie at Ala31 to Leu51, Leu61 to Val81, Val116 to Leu136, and Leu139 to Val159.

Belongs to the PA-phosphatase related phosphoesterase family.

Its subcellular location is the cell membrane. It carries out the reaction trans,octa-cis-decaprenylphospho-beta-D-ribofuranose 5-phosphate + H2O = trans,octa-cis-decaprenylphospho-beta-D-ribofuranose + phosphate. It functions in the pathway cell wall biogenesis; cell wall polysaccharide biosynthesis. Its function is as follows. Phosphatase involved in the biosynthesis of decaprenylphosphoryl arabinose (DPA), which serves as the arabinose donor for the biosynthesis of arabinogalactan, the major mycobacterial cell wall polysaccharide. Catalyzes the dephosphorylation of decaprenylphosphoryl-5-phosphoribose (DPPR) to decaprenyl-phosphoribose (DPR). The polypeptide is Decaprenylphosphoryl-5-phosphoribose phosphatase (Mycolicibacterium smegmatis (strain ATCC 700084 / mc(2)155) (Mycobacterium smegmatis)).